The chain runs to 391 residues: Small ribosomal subunit protein bS1 (391 aa).

S1 motif domains are found at residues 16-90 (GDKV…LSRR), 108-173 (NEII…LSRK), 194-262 (GDVI…LSIK), and 279-348 (NDVI…LSIK).

The protein belongs to the bacterial ribosomal protein bS1 family.

Binds mRNA; thus facilitating recognition of the initiation point. It is needed to translate mRNA with a short Shine-Dalgarno (SD) purine-rich sequence. In Staphylococcus aureus (strain N315), this protein is Small ribosomal subunit protein bS1 (rpsA).